A 1067-amino-acid polypeptide reads, in one-letter code: Ubiquitin conjugation factor E4 A (1067 aa).

The segment at 33–57 is disordered; sequence KEQLKQQSDELPASPDDSDNSVSES. Lys-386 is subject to N6-acetyllysine. The U-box domain maps to 987–1061; that stretch reads DACDEFLDPI…QRWLAERKQQ (75 aa).

The protein belongs to the ubiquitin conjugation factor E4 family.

Its subcellular location is the cytoplasm. It carries out the reaction S-ubiquitinyl-[E2 ubiquitin-conjugating enzyme]-L-cysteine + [acceptor protein]-L-lysine = [E2 ubiquitin-conjugating enzyme]-L-cysteine + N(6)-ubiquitinyl-[acceptor protein]-L-lysine.. Its pathway is protein modification; protein ubiquitination. Its function is as follows. Ubiquitin-protein ligase that probably functions as an E3 ligase in conjunction with specific E1 and E2 ligases. May also function as an E4 ligase mediating the assembly of polyubiquitin chains on substrates ubiquitinated by another E3 ubiquitin ligase. Mediates 'Lys-48'-linked polyubiquitination of substrates. The protein is Ubiquitin conjugation factor E4 A of Bos taurus (Bovine).